An 826-amino-acid polypeptide reads, in one-letter code: Prominin-1-A (826 aa).

Helical transmembrane passes span 50–70 (YYEP…LFVV), 106–126 (VVCA…GLLF), and 153–173 (LLTT…LCAY). N-linked (GlcNAc...) asparagine glycosylation is found at Asn178, Asn268, Asn286, Asn327, Asn388, and Asn404. Transmembrane regions (helical) follow at residues 439 to 459 (CMIV…ILGF) and 483 to 503 (VGFS…LFLA). Residues Asn576, Asn582, Asn617, and Asn693 are each glycosylated (N-linked (GlcNAc...) asparagine).

It belongs to the prominin family.

Its subcellular location is the apical cell membrane. The protein resides in the cell projection. It is found in the microvillus membrane. It localises to the endoplasmic reticulum. The protein localises to the endoplasmic reticulum-Golgi intermediate compartment. May play a role in cell differentiation, proliferation and apoptosis. Binds cholesterol in cholesterol-containing plasma membrane microdomains and may play a role in the organization of the apical plasma membrane in epithelial cells. Involved in regulation of MAPK and Akt signaling pathways. This is Prominin-1-A (prom1a) from Danio rerio (Zebrafish).